The following is a 293-amino-acid chain: Formamidopyrimidine-DNA glycosylase (293 aa).

The Schiff-base intermediate with DNA role is filled by Pro2. The active-site Proton donor is the Glu3. The active-site Proton donor; for beta-elimination activity is the Lys58. DNA-binding residues include His104, Arg127, and Arg170. The FPG-type zinc finger occupies 257–293 (SVYGREGKPCRNPACGGTVERVVQSGRSTFFCASCQT). Residue Arg283 is the Proton donor; for delta-elimination activity of the active site.

Belongs to the FPG family. As to quaternary structure, monomer. Zn(2+) serves as cofactor.

The enzyme catalyses Hydrolysis of DNA containing ring-opened 7-methylguanine residues, releasing 2,6-diamino-4-hydroxy-5-(N-methyl)formamidopyrimidine.. It carries out the reaction 2'-deoxyribonucleotide-(2'-deoxyribose 5'-phosphate)-2'-deoxyribonucleotide-DNA = a 3'-end 2'-deoxyribonucleotide-(2,3-dehydro-2,3-deoxyribose 5'-phosphate)-DNA + a 5'-end 5'-phospho-2'-deoxyribonucleoside-DNA + H(+). In terms of biological role, involved in base excision repair of DNA damaged by oxidation or by mutagenic agents. Acts as a DNA glycosylase that recognizes and removes damaged bases. Has a preference for oxidized purines, such as 7,8-dihydro-8-oxoguanine (8-oxoG). Has AP (apurinic/apyrimidinic) lyase activity and introduces nicks in the DNA strand. Cleaves the DNA backbone by beta-delta elimination to generate a single-strand break at the site of the removed base with both 3'- and 5'-phosphates. This chain is Formamidopyrimidine-DNA glycosylase, found in Brucella melitensis biotype 1 (strain ATCC 23456 / CCUG 17765 / NCTC 10094 / 16M).